The chain runs to 482 residues: Scarecrow-like protein 3 (482 aa).

One can recognise a GRAS domain in the interval 45-479 (LKPEERGLYL…RPLYSVSAWR (435 aa)). The tract at residues 52-115 (LYLIHLLLTC…ILKSWPGLYK (64 aa)) is leucine repeat I (LRI). The segment at 134 to 199 (RRLFFEMFPI…EGPPHLRITG (66 aa)) is VHIID. The VHIID signature appears at 165–169 (VHVID). Positions 209–241 (QMAHRLIEEAEKLDIPFQFNPVVSRLDCLNVEQ) are leucine repeat II (LRII). Residues 250–401 (LAVSSVLQLH…KMLFGEEIKN (152 aa)) are PFYRE. The tract at residues 302–324 (ENDMSNNNGYSPSGDSASSLPLP) is disordered. A compositionally biased stretch (polar residues) spans 305 to 324 (MSNNNGYSPSGDSASSLPLP). The segment at 404–479 (SCEGFERRER…RPLYSVSAWR (76 aa)) is SAW.

This sequence belongs to the GRAS family. Binds to zinc finger proteins MGP/IDD3, IDD4, IDD5, BIB/IDD9 and JKD/IDD10. As to expression, expressed in seedlings, root epidermis, leaves, flowers and siliques.

Its subcellular location is the nucleus. In terms of biological role, probable transcription factor involved in plant development. The protein is Scarecrow-like protein 3 of Arabidopsis thaliana (Mouse-ear cress).